Reading from the N-terminus, the 1793-residue chain is Nucleoporin NUP145 (1793 aa).

9 GLFG repeats span residues 50 to 53, 143 to 146, 255 to 258, 282 to 285, 292 to 295, 306 to 309, 336 to 339, 381 to 384, and 395 to 398; these read GLFG. 4 disordered regions span residues 404–583, 740–859, 999–1043, and 1066–1097; these read GSAF…QQPQ, RTDL…EPGA, GDDD…DDTF, and EVAN…PEDE. The segment covering 417 to 431 has biased composition (polar residues); sequence NQSTGTSLFGNTQQK. GLFG repeat units lie at residues 434-437, 446-449, 470-473, 481-484, and 496-499; these read GLFG. Low complexity predominate over residues 437–459; that stretch reads GSTTTNTSGGLFGSTNTGTSTFG. Residues 467–483 show a composition bias toward gly residues; it reads TGGGLFGSKPAGTGGLF. Positions 500–511 are enriched in polar residues; that stretch reads NLNTNAQTQQPA. Residues 514 to 517 form a GLFG 15 repeat; that stretch reads GLFG. The span at 518–535 shows a compositional bias: low complexity; that stretch reads NLGQNNQAKPSLFGTSTT. A GLFG 16 repeat occupies 539–542; it reads GLFG. Composition is skewed to polar residues over residues 546–575 and 801–813; these read AQQQ…FGSS and STAN…NGAK. The segment covering 814–823 has biased composition (low complexity); the sequence is SSPVAAASPP. Over residues 826–840 the composition is skewed to basic and acidic residues; sequence EQVKGKELAVVHEEE. In terms of domain architecture, Peptidase S59 spans 857-993; that stretch reads PGAYWMSPTA…GVWAFSVEHF (137 aa). The interval 859–992 is nucleoporin RNA-binding motif (NRM); the sequence is AYWMSPTADD…TGVWAFSVEH (134 aa). A compositionally biased stretch (acidic residues) spans 999-1013; that stretch reads GDDDDYDDDDYETEP. Positions 1025–1037 are enriched in low complexity; it reads TSPSISKSSTSPI.

Belongs to the nucleoporin GLFG family. In terms of assembly, component of the nuclear pore complex (NPC). NPC constitutes the exclusive means of nucleocytoplasmic transport. NPCs allow the passive diffusion of ions and small molecules and the active, nuclear transport receptor-mediated bidirectional transport of macromolecules such as proteins, RNAs, ribonucleoparticles (RNPs), and ribosomal subunits across the nuclear envelope. Due to its 8-fold rotational symmetry, all subunits are present with 8 copies or multiples thereof. Post-translationally, NUP145 is autocatalytically cleaved in NUP145N and NUP145C.

The protein localises to the nucleus. Its subcellular location is the nuclear pore complex. It localises to the nucleus membrane. Functionally, functions as a component of the nuclear pore complex (NPC). NPC components, collectively referred to as nucleoporins (NUPs), can play the role of both NPC structural components and of docking or interaction partners for transiently associated nuclear transport factors. Active directional transport is assured by both, a Phe-Gly (FG) repeat affinity gradient for these transport factors across the NPC and a transport cofactor concentration gradient across the nuclear envelope. NUP145 is autocatalytically cleaved in vivo in 2 polypeptides which assume different functions in the NPC. NUP145N as one of the FG repeat nucleoporins participates in karyopherin interactions and contains part of the autocatalytic cleavage activity. NUP145C as part of the NUP84 complex is involved in nuclear poly(A)+ RNA and tRNA export. In Chaetomium thermophilum (strain DSM 1495 / CBS 144.50 / IMI 039719) (Thermochaetoides thermophila), this protein is Nucleoporin NUP145 (NUP145).